The chain runs to 585 residues: MTKIRVLDPDTVNQIAAGEVVERPASVVKELLENAIDADSTSILIDVSSDMAAITKIRVTDNGEGMTPEEAVLAFHPHATSKIRDIADLSAVRTLGFRGEALASIAAVAEVTLVTRPRGGGALAGTRLVVRGGEIVEKSEVGAPEGTTIAVERLFYNTPARRKFLKSRNTELAHVYAVVESLALAHGEVAFRVVHNGKERMATQRSGGALNTIAGLYGADLARSLVPVEGRLPFLAIRGYISRPSESRGNPSQISVSINGRSIASRQIAAAVREGYGTLLPKDRYPVAFLDLAIDTGLVDVNVHPTKREIRLSREREITGAIAAAVDEALAGHDLARETPVEPVQQQIIAADPGQVPTPSPVGEPGAPYTAGHRGLTLSDKQLRRTETEGGENLLPAMEPIGQVAATYIVAEGADGTLYLVDQHAAHERVLYDQVTEQRDKAAGSQELITPVVLSLPPKESAALRDAIPLLADEGFVVDEFGRDTFAVRAVPAALGAVEDPGTVRETIADLLADESRTAPDRRERVTCIVACRGAVKAGALLTPDQQKRLIMQLARTKTPWTCPHGRPTVVAFDRRRLDGMFRRG.

Belongs to the DNA mismatch repair MutL/HexB family.

In terms of biological role, this protein is involved in the repair of mismatches in DNA. It is required for dam-dependent methyl-directed DNA mismatch repair. May act as a 'molecular matchmaker', a protein that promotes the formation of a stable complex between two or more DNA-binding proteins in an ATP-dependent manner without itself being part of a final effector complex. The protein is DNA mismatch repair protein MutL of Methanoculleus marisnigri (strain ATCC 35101 / DSM 1498 / JR1).